A 358-amino-acid polypeptide reads, in one-letter code: DNA replication and repair protein RecF (358 aa).

33-40 serves as a coordination point for ATP; sequence GENGAGKT.

This sequence belongs to the RecF family.

Its subcellular location is the cytoplasm. Its function is as follows. The RecF protein is involved in DNA metabolism; it is required for DNA replication and normal SOS inducibility. RecF binds preferentially to single-stranded, linear DNA. It also seems to bind ATP. The polypeptide is DNA replication and repair protein RecF (Deinococcus geothermalis (strain DSM 11300 / CIP 105573 / AG-3a)).